The following is a 672-amino-acid chain: UvrABC system protein B (672 aa).

Residues 26–181 (AGLEDGLAYQ…ILQRLAELQY (156 aa)) form the Helicase ATP-binding domain. Position 39-46 (39-46 (GVTGSGKT)) interacts with ATP. The Beta-hairpin signature appears at 92 to 115 (YYDYYQPEAYVPSSDTYIEKDASI). Positions 430 to 592 (QVDDLLSEIK…ITPKSIQKAV (163 aa)) constitute a Helicase C-terminal domain. The 36-residue stretch at 631–666 (AKELRKLEEQMYHHARNLEFEEAAAVRDKIQHIRKG) folds into the UVR domain.

The protein belongs to the UvrB family. In terms of assembly, forms a heterotetramer with UvrA during the search for lesions. Interacts with UvrC in an incision complex.

The protein resides in the cytoplasm. In terms of biological role, the UvrABC repair system catalyzes the recognition and processing of DNA lesions. A damage recognition complex composed of 2 UvrA and 2 UvrB subunits scans DNA for abnormalities. Upon binding of the UvrA(2)B(2) complex to a putative damaged site, the DNA wraps around one UvrB monomer. DNA wrap is dependent on ATP binding by UvrB and probably causes local melting of the DNA helix, facilitating insertion of UvrB beta-hairpin between the DNA strands. Then UvrB probes one DNA strand for the presence of a lesion. If a lesion is found the UvrA subunits dissociate and the UvrB-DNA preincision complex is formed. This complex is subsequently bound by UvrC and the second UvrB is released. If no lesion is found, the DNA wraps around the other UvrB subunit that will check the other stand for damage. This chain is UvrABC system protein B, found in Coxiella burnetii (strain CbuK_Q154) (Coxiella burnetii (strain Q154)).